A 538-amino-acid chain; its full sequence is 2-isopropylmalate synthase (538 aa).

The Pyruvate carboxyltransferase domain occupies 6–277 (LIIFDTTLRD…DSTVPLSTID (272 aa)). Residues D15, H206, H208, and N242 each coordinate Mn(2+). Positions 406–538 (RLEQVQVSCG…AHPDAAAQKL (133 aa)) are regulatory domain.

The protein belongs to the alpha-IPM synthase/homocitrate synthase family. LeuA type 1 subfamily. As to quaternary structure, homodimer. Mn(2+) is required as a cofactor.

It localises to the cytoplasm. It carries out the reaction 3-methyl-2-oxobutanoate + acetyl-CoA + H2O = (2S)-2-isopropylmalate + CoA + H(+). The protein operates within amino-acid biosynthesis; L-leucine biosynthesis; L-leucine from 3-methyl-2-oxobutanoate: step 1/4. In terms of biological role, catalyzes the condensation of the acetyl group of acetyl-CoA with 3-methyl-2-oxobutanoate (2-ketoisovalerate) to form 3-carboxy-3-hydroxy-4-methylpentanoate (2-isopropylmalate). The sequence is that of 2-isopropylmalate synthase from Gloeobacter violaceus (strain ATCC 29082 / PCC 7421).